Consider the following 86-residue polypeptide: MNISKPEQRTLHALARGGRIDIEKDDDRRIIEVDCITREGWRLLDCDMTTFRKLRSKRLIASENGGPYRITRKGLAAVRPQPDNRS.

Belongs to the UPF0386 family.

The chain is UPF0386 protein RC1_1783 from Rhodospirillum centenum (strain ATCC 51521 / SW).